Reading from the N-terminus, the 790-residue chain is Choline transporter-like 2 (790 aa).

A helical transmembrane segment spans residues Pro47–Val67. N-linked (GlcNAc...) asparagine glycans are attached at residues Asn102 and Asn259. A run of 3 helical transmembrane segments spans residues Ile288 to Ile308, Ile319 to Trp339, and Leu344 to Phe364. The N-linked (GlcNAc...) asparagine glycan is linked to Asn384. The next 2 helical transmembrane spans lie at Leu400–Leu420 and Leu449–Leu469. Residue Asn483 is glycosylated (N-linked (GlcNAc...) asparagine). Transmembrane regions (helical) follow at residues Val545–Phe565, Val592–Ile612, Val691–Thr711, and Phe728–Val748.

Belongs to the CTL (choline transporter-like) family.

Its subcellular location is the membrane. The chain is Choline transporter-like 2 from Anopheles gambiae (African malaria mosquito).